A 339-amino-acid chain; its full sequence is Dihydroorotate dehydrogenase (quinone) (339 aa).

FMN contacts are provided by residues 62–66 and Thr86; that span reads AGMDK. Residue Lys66 coordinates substrate. Substrate is bound at residue 111 to 115; sequence NRMGF. 2 residues coordinate FMN: Asn139 and Asn172. Position 172 (Asn172) interacts with substrate. Ser175 acts as the Nucleophile in catalysis. A substrate-binding site is contributed by Asn177. FMN-binding residues include Lys217 and Thr245. Residue 246–247 coordinates substrate; the sequence is NT. FMN-binding positions include Gly268, Gly297, and 318–319; that span reads YS.

It belongs to the dihydroorotate dehydrogenase family. Type 2 subfamily. As to quaternary structure, monomer. FMN is required as a cofactor.

The protein resides in the cell membrane. It catalyses the reaction (S)-dihydroorotate + a quinone = orotate + a quinol. It participates in pyrimidine metabolism; UMP biosynthesis via de novo pathway; orotate from (S)-dihydroorotate (quinone route): step 1/1. In terms of biological role, catalyzes the conversion of dihydroorotate to orotate with quinone as electron acceptor. In Shewanella putrefaciens (strain CN-32 / ATCC BAA-453), this protein is Dihydroorotate dehydrogenase (quinone).